Here is a 331-residue protein sequence, read N- to C-terminus: Major outer membrane protein P.IB (331 aa).

The signal sequence occupies residues 1-19 (MKKSLIALTLAALPVAAMA).

It belongs to the Gram-negative porin family. In terms of assembly, homotrimer.

The protein localises to the cell outer membrane. Serves as a slightly cation selective porin. The sequence is that of Major outer membrane protein P.IB (porB) from Neisseria meningitidis serogroup B.